The sequence spans 163 residues: uncharacterized protein (163 aa).

A coiled-coil region spans residues 101-162 (LESMKVERKP…KMGERILERE (62 aa)).

This is an uncharacterized protein from Aquifex aeolicus (strain VF5).